Reading from the N-terminus, the 456-residue chain is UDP-N-acetylglucosamine 1-carboxyvinyltransferase (456 aa).

34-35 (KN) provides a ligand contact to phosphoenolpyruvate. Arg104 lines the UDP-N-acetyl-alpha-D-glucosamine pocket. The active-site Proton donor is the Cys128. The residue at position 128 (Cys128) is a 2-(S-cysteinyl)pyruvic acid O-phosphothioketal. Asp319 and Ile341 together coordinate UDP-N-acetyl-alpha-D-glucosamine.

Belongs to the EPSP synthase family. MurA subfamily.

It is found in the cytoplasm. The enzyme catalyses phosphoenolpyruvate + UDP-N-acetyl-alpha-D-glucosamine = UDP-N-acetyl-3-O-(1-carboxyvinyl)-alpha-D-glucosamine + phosphate. Its pathway is cell wall biogenesis; peptidoglycan biosynthesis. Functionally, cell wall formation. Adds enolpyruvyl to UDP-N-acetylglucosamine. The chain is UDP-N-acetylglucosamine 1-carboxyvinyltransferase from Prochlorococcus marinus (strain MIT 9312).